The chain runs to 202 residues: Shikimate kinase (202 aa).

ATP is bound at residue 20 to 25 (GSGKST). Ser-24 provides a ligand contact to Mg(2+). 3 residues coordinate substrate: Asp-42, Arg-66, and Gly-88. Position 126 (Arg-126) interacts with ATP. Arg-153 contributes to the substrate binding site.

The protein belongs to the shikimate kinase family. As to quaternary structure, monomer. Requires Mg(2+) as cofactor.

The protein localises to the cytoplasm. It catalyses the reaction shikimate + ATP = 3-phosphoshikimate + ADP + H(+). It functions in the pathway metabolic intermediate biosynthesis; chorismate biosynthesis; chorismate from D-erythrose 4-phosphate and phosphoenolpyruvate: step 5/7. Catalyzes the specific phosphorylation of the 3-hydroxyl group of shikimic acid using ATP as a cosubstrate. The chain is Shikimate kinase from Chlorobium luteolum (strain DSM 273 / BCRC 81028 / 2530) (Pelodictyon luteolum).